We begin with the raw amino-acid sequence, 387 residues long: Putative odorant receptor 19b (387 aa).

The Cytoplasmic segment spans residues 1-40 (MDISKVDSTRALVNHWRIFRIMGIHPPGKRTFWGRHYTAY). A helical transmembrane segment spans residues 41–61 (SMVWNVTFHICIWVSFSVNLL). Residues 62-71 (QSNSLETFCE) lie on the Extracellular side of the membrane. A helical transmembrane segment spans residues 72 to 92 (SLCVTMPHTLYMLKLINVRRM). Over 93-127 (RGEMISSHWLLRLLDKRLGCADERQIIMAGIERAE) the chain is Cytoplasmic. The helical transmembrane segment at 128-148 (FIFRTIFRGLACTVVLGIIYI) threads the bilayer. Topologically, residues 149 to 171 (SASSEPTLMYPTWIPWNWKDSTS) are extracellular. A helical membrane pass occupies residues 172–192 (AYLATAMLHTTALMANATLVL). Residues 193 to 254 (NLSSYPGTYL…LRLFKSLERS (62 aa)) are Cytoplasmic-facing. A helical transmembrane segment spans residues 255-275 (LSMTCFLQFFSTACAQCTICY). The Extracellular segment spans residues 276-285 (FLLFGNVGIM). The chain crosses the membrane as a helical span at residues 286–306 (RFMNMLFLLVILTTETLLLCY). Residues 307 to 336 (TAELPCKEGESLLTAVYSCNWLSQSVNFRR) lie on the Cytoplasmic side of the membrane. The helical transmembrane segment at 337-357 (LLLLMLARCQIPMILVSGVIV) threads the bilayer. Residues 358–387 (PISMKTFTVMIKGAYTMLTLLNEIRKTSLE) are Extracellular-facing.

Belongs to the insect chemoreceptor superfamily. Heteromeric odorant receptor channel (TC 1.A.69) family. Or2a subfamily. Interacts with Orco. Complexes exist early in the endomembrane system in olfactory sensory neurons (OSNs), coupling these complexes to the conserved ciliary trafficking pathway.

It is found in the cell membrane. Functionally, odorant receptor which mediates acceptance or avoidance behavior, depending on its substrates. The odorant receptor repertoire encodes a large collection of odor stimuli that vary widely in identity, intensity, and duration. May form a complex with Orco to form odorant-sensing units, providing sensitive and prolonged odorant signaling and calcium permeability. The sequence is that of Putative odorant receptor 19b from Drosophila melanogaster (Fruit fly).